The primary structure comprises 211 residues: MRVRRRKGAKEHLENNPRYVILKPEEVKGHWQEVFGNDHPIHIEVGSGKGRFITGMAAKNPQINYIGIDIQVSVLSHALDKVLDSQLPNVKLMLADGSSLMHYFADGEIDLLYLNFSDPWPKKRHEKRRLTYKSFLDTYKKILPEKGEIHFKTDNRELFEYSLASFSQYGMILEQVWLDLHASDYENNVMTEYEEKFSQKGQVIYRVEARF.

S-adenosyl-L-methionine contacts are provided by Glu-44, Asp-69, Asp-96, and Asp-118. Residue Asp-118 is part of the active site. Lys-122 lines the substrate pocket. Residues 124 to 129 (RHEKRR) form an interaction with RNA region. Substrate-binding positions include Asp-154 and 191–194 (TEYE).

This sequence belongs to the class I-like SAM-binding methyltransferase superfamily. TrmB family.

The enzyme catalyses guanosine(46) in tRNA + S-adenosyl-L-methionine = N(7)-methylguanosine(46) in tRNA + S-adenosyl-L-homocysteine. The protein operates within tRNA modification; N(7)-methylguanine-tRNA biosynthesis. In terms of biological role, catalyzes the formation of N(7)-methylguanine at position 46 (m7G46) in tRNA. This is tRNA (guanine-N(7)-)-methyltransferase from Streptococcus mutans serotype c (strain ATCC 700610 / UA159).